The chain runs to 489 residues: Protein-export membrane protein SecD (489 aa).

The next 6 membrane-spanning stretches (helical) occupy residues 17 to 37 (VLIVLVLVILSVLSIYAIPPA), 328 to 348 (FIQIVCIAAAILGLLAVAFMV), 356 to 376 (SIVVPMILVNLSEIIILLGIA), 384 to 404 (LASIAGLIAVIGTGIDQLVVI), 428 to 448 (LGIITVSASTTIFAMLPLALM), and 450 to 470 (LSTLKGFAIITILGVLIGVIF).

It belongs to the SecD/SecF family. SecD subfamily. As to quaternary structure, part of the protein translocation apparatus. Forms a complex with SecF.

It localises to the cell membrane. Its function is as follows. Involved in protein export. This chain is Protein-export membrane protein SecD, found in Methanolacinia petrolearia (strain DSM 11571 / OCM 486 / SEBR 4847) (Methanoplanus petrolearius).